The chain runs to 360 residues: POU domain, class 5, transcription factor 1 (360 aa).

Disordered regions lie at residues 1 to 48 (MAGH…SGIG) and 86 to 137 (PPGG…EESQ). The 9aaTAD motif lies at 4 to 12 (HLASDFAFS). Serine 111 carries the post-translational modification Phosphoserine; by MAPK. Residue lysine 123 forms a Glycyl lysine isopeptide (Lys-Gly) (interchain with G-Cter in SUMO) linkage. A compositionally biased stretch (basic and acidic residues) spans 123–137 (KLDKEKLEPNPEESQ). The region spanning 138 to 212 (DIKALQKDLE…LLQKWVEEAD (75 aa)) is the POU-specific domain. 2 residues coordinate DNA: arginine 157 and glutamine 164. DNA-binding regions lie at residues 180–186 (SQTTICR) and 193–196 (SFKN). The segment at residues 230–289 (RKRKRTSIENRVRGNLESMFLQCPKPTLQQISHIAQQLGLEKDVVRVWFCNRRQKGKRSS) is a DNA-binding region (homeobox). The residue at position 235 (threonine 235) is a Phosphothreonine. 4 positions are modified to phosphoserine: serine 236, serine 289, serine 290, and serine 355. The segment at 287–322 (RSSSDYSQREDFEAAGSPFTGGPVSSPLAPGPHFGT) is disordered.

The protein belongs to the POU transcription factor family. Class-5 subfamily. Interacts with PKM. Interacts with WWP2. Interacts with UBE2I and ZSCAN10. Interacts with PCGF1. Interacts with ESRRB; recruits ESRRB near the POU5F1-SOX2 element in the NANOG proximal promoter; the interaction is DNA independent. Interacts with MAPK8 and MAPK9; the interaction allows MAPK8 and MAPK9 to phosphorylate POU5F1 on Ser-355. Interacts (when phosphorylated on Ser-355) with FBXW8. Interacts with FBXW4. Interacts with SOX2 and SOX15; binds synergistically with either SOX2 or SOX15 to DNA. Interacts with DDX56. In terms of processing, sumoylation enhances the protein stability, DNA binding and transactivation activity. Sumoylation is required for enhanced YES1 expression. Post-translationally, ubiquitinated; undergoes 'Lys-63'-linked polyubiquitination by WWP2 leading to proteasomal degradation. ERK1/2-mediated phosphorylation at Ser-111 promotes nuclear exclusion and proteasomal degradation. Phosphorylation at Thr-235 and Ser-236 decrease DNA-binding and alters ability to activate transcription. As to expression, expressed in immature oocytes.

It localises to the cytoplasm. The protein localises to the nucleus. In terms of biological role, transcription factor that binds to the octamer motif (5'-ATTTGCAT-3'). Forms a trimeric complex with SOX2 or SOX15 on DNA and controls the expression of a number of genes involved in embryonic development such as YES1, FGF4, UTF1 and ZFP206. Critical for early embryogenesis and for embryonic stem cell pluripotency. In Bos taurus (Bovine), this protein is POU domain, class 5, transcription factor 1 (POU5F1).